The chain runs to 113 residues: Endoribonuclease SymE (113 aa).

The 46-residue stretch at 29–74 folds into the SpoVT-AbrB domain; it reads SRYPDYSRIPAITLKGQWLEAAGFATGTAVDVKVMEGCIVLTAQPP.

It belongs to the SymE family.

The protein localises to the cytoplasm. Involved in the degradation and recycling of damaged RNA. It is itself a target for degradation by the ATP-dependent protease Lon. In Escherichia coli (strain K12 / MC4100 / BW2952), this protein is Endoribonuclease SymE.